Here is a 138-residue protein sequence, read N- to C-terminus: Small ribosomal subunit protein uS11 (138 aa).

Disordered regions lie at residues 1 to 29 and 117 to 138; these read MPPK…PHGA and GAIS…RRRV. Over residues 13-22 the composition is skewed to basic residues; sequence KGQKTRRREK.

Belongs to the universal ribosomal protein uS11 family. Part of the 30S ribosomal subunit. Interacts with proteins S7 and S18. Binds to IF-3.

Its function is as follows. Located on the platform of the 30S subunit, it bridges several disparate RNA helices of the 16S rRNA. Forms part of the Shine-Dalgarno cleft in the 70S ribosome. The polypeptide is Small ribosomal subunit protein uS11 (Mycobacterium ulcerans (strain Agy99)).